Reading from the N-terminus, the 123-residue chain is Large ribosomal subunit protein uL14 (123 aa).

The protein belongs to the universal ribosomal protein uL14 family. In terms of assembly, part of the 50S ribosomal subunit. Forms a cluster with proteins L3 and L19. In the 70S ribosome, L14 and L19 interact and together make contacts with the 16S rRNA in bridges B5 and B8.

Binds to 23S rRNA. Forms part of two intersubunit bridges in the 70S ribosome. This chain is Large ribosomal subunit protein uL14, found in Histophilus somni (strain 129Pt) (Haemophilus somnus).